A 1489-amino-acid polypeptide reads, in one-letter code: FERM domain-containing protein C (1489 aa).

Polar residues-rich tracts occupy residues 59 to 79 (DTES…NFNS) and 103 to 118 (NSPL…STSI). Disordered stretches follow at residues 59-86 (DTES…HQHL), 103-197 (NSPL…PSTL), 252-271 (NSVQ…NNNN), and 277-312 (EQQQ…TPDS). A compositionally biased stretch (low complexity) spans 131–153 (SSSSSSSDGDSNSSSDSSDNSSE). The span at 163–172 (HLHLHRHHRK) shows a compositional bias: basic residues. Residues 181–195 (FESSSESSEQYGSPS) are compositionally biased toward low complexity. Positions 202 to 289 (ALKLEKIMQI…QEKQQQQQQH (88 aa)) form a coiled coil. Low complexity predominate over residues 277 to 287 (EQQQEKQQQQQ). Residues 303–312 (RSVSISTPDS) show a composition bias toward polar residues. A coiled-coil region spans residues 356–383 (IKVSKVLEEEMQLQQEFEKQEQLRHSAR). 3 disordered regions span residues 396–435 (NLQD…ENQN), 459–479 (VITP…KILT), and 508–569 (EDPL…TTTT). Residues 421-435 (ENVSNDNSSDNENQN) show a composition bias toward low complexity. Residues 545–555 (TASSSSSPTLQ) are compositionally biased toward polar residues. The span at 556–569 (ATKTTTTTTTTTTT) shows a compositional bias: low complexity. One can recognise an FERM domain in the interval 637–934 (ILVHISLVDQ…GYKYFIQHDE (298 aa)). LRR repeat units lie at residues 1017 to 1040 (KVEL…LKDT), 1053 to 1075 (ENLN…AFEP), 1087 to 1110 (HLNL…IEKY), 1111 to 1133 (PNIE…VILR), 1167 to 1191 (NKTI…IFEG), 1196 to 1219 (SLSL…KFIK), 1254 to 1278 (SCHI…VIKG), 1282 to 1306 (NQTI…LCQS), 1339 to 1362 (NKTI…AIGT), 1367 to 1391 (NETL…ILNG), 1395 to 1418 (NSTI…SLAN), 1428 to 1450 (VITL…QLST), and 1451 to 1474 (NIPI…IKNA).

This Dictyostelium discoideum (Social amoeba) protein is FERM domain-containing protein C (frmC).